A 489-amino-acid chain; its full sequence is GTPase Der (489 aa).

2 consecutive EngA-type G domains span residues 30–199 (PVVS…KDKP) and 227–403 (FRLA…SRSH). GTP is bound by residues 36 to 43 (GRQNVGKS), 85 to 89 (DTPGL), 151 to 154 (NKAD), 233 to 240 (GKPNSGKS), 280 to 284 (DTAGI), and 345 to 348 (NKWD). Residues 404-488 (RKVSTSELNK…PIRLEFRSDR (85 aa)) enclose the KH-like domain.

This sequence belongs to the TRAFAC class TrmE-Era-EngA-EngB-Septin-like GTPase superfamily. EngA (Der) GTPase family. As to quaternary structure, associates with the 50S ribosomal subunit.

Functionally, GTPase that plays an essential role in the late steps of ribosome biogenesis. This Leptospira interrogans serogroup Icterohaemorrhagiae serovar copenhageni (strain Fiocruz L1-130) protein is GTPase Der.